The primary structure comprises 240 residues: Probable septum site-determining protein MinC (240 aa).

It belongs to the MinC family. As to quaternary structure, interacts with MinD and FtsZ.

Functionally, cell division inhibitor that blocks the formation of polar Z ring septums. Rapidly oscillates between the poles of the cell to destabilize FtsZ filaments that have formed before they mature into polar Z rings. Prevents FtsZ polymerization. This chain is Probable septum site-determining protein MinC, found in Aeromonas hydrophila subsp. hydrophila (strain ATCC 7966 / DSM 30187 / BCRC 13018 / CCUG 14551 / JCM 1027 / KCTC 2358 / NCIMB 9240 / NCTC 8049).